Here is a 256-residue protein sequence, read N- to C-terminus: Kallikrein-15 (256 aa).

The N-terminal stretch at 1–16 (MWLLLTLSFLLASTAA) is a signal peptide. The propeptide at 17–21 (QDGDK) is activation peptide. The Peptidase S1 domain maps to 22 to 254 (LLEGDECAPH…YLEWIRETMK (233 aa)). Residues C47 and C63 are joined by a disulfide bond. Residues H62 and D106 each act as charge relay system in the active site. 3 cysteine pairs are disulfide-bonded: C138–C215, C180–C194, and C205–C230. An N-linked (GlcNAc...) asparagine glycan is attached at N171. S209 serves as the catalytic Charge relay system. N232 is a glycosylation site (N-linked (GlcNAc...) asparagine).

The protein belongs to the peptidase S1 family. Kallikrein subfamily. As to expression, highest expression in the thyroid gland. Also expressed in the prostate, salivary, and adrenal glands and in the colon testis and kidney.

The protein localises to the secreted. Functionally, protease whose physiological substrate is not yet known. In Homo sapiens (Human), this protein is Kallikrein-15 (KLK15).